Here is a 365-residue protein sequence, read N- to C-terminus: Large ribosomal subunit protein uL3 (365 aa).

Positions 343–365 are disordered; the sequence is RPPKKKPPVQRPQITYVSVESKQ. Residues 354-365 show a composition bias toward polar residues; sequence PQITYVSVESKQ.

This sequence belongs to the universal ribosomal protein uL3 family. As to quaternary structure, part of the 50S ribosomal subunit. Forms a cluster with proteins L14 and L24e.

Its function is as follows. One of the primary rRNA binding proteins, it binds directly near the 3'-end of the 23S rRNA, where it nucleates assembly of the 50S subunit. This Pyrococcus furiosus (strain ATCC 43587 / DSM 3638 / JCM 8422 / Vc1) protein is Large ribosomal subunit protein uL3.